The following is a 273-amino-acid chain: (5R)-carbapenem-3-carboxylate synthase (273 aa).

Residues histidine 101 and aspartate 103 each coordinate Fe cation. Glycine 104 is a substrate binding site. Residue threonine 130 participates in 2-oxoglutarate binding. Histidine 251 serves as a coordination point for Fe cation. 3 residues coordinate 2-oxoglutarate: arginine 253, arginine 263, and arginine 267.

The protein belongs to the TfdA dioxygenase family. As to quaternary structure, homohexamer. Dimer of trimers. The cofactor is Fe(2+).

It localises to the cytoplasm. The enzyme catalyses (3S,5S)-carbapenam-3-caboxylate + 2-oxoglutarate + O2 = (5R)-carbapenem-3-carboxylate + succinate + CO2 + H2O. With respect to regulation, inhibited by L-N-acetylproline and by D-N-acetylproline. Functionally, catalyzes the Fe(2+) and alpha-ketoglutarate-dependent conversion of (3S,5S)-carbapenam to (5R)-carbapenem, an essential step in carbapenem antibiotic biosynthesis. In Pectobacterium carotovorum subsp. carotovorum (Erwinia carotovora subsp. carotovora), this protein is (5R)-carbapenem-3-carboxylate synthase (carC).